A 296-amino-acid polypeptide reads, in one-letter code: GTP-binding protein GEM (296 aa).

2 disordered regions span residues 1-20 (MTLNNVTMRQGTVGMQPQQQ) and 37-68 (PHQYSHRNRHSATPEDHCRRSWSSDSTDSVIS). The span at 57-68 (SWSSDSTDSVIS) shows a compositional bias: low complexity. GTP-binding positions include 82 to 89 (GEQGVGKS) and 191 to 194 (NKSD). The interval 266–285 (ARRFWGKIVAKNNKNMAFKL) is calmodulin-binding.

The protein belongs to the small GTPase superfamily. RGK family. In terms of assembly, interacts with calmodulin in a Ca(2+)-dependent manner. Binds ROCK1. Post-translationally, phosphorylated on tyrosine residues.

It localises to the cell membrane. Could be a regulatory protein, possibly participating in receptor-mediated signal transduction at the plasma membrane. Has guanine nucleotide-binding activity but undetectable intrinsic GTPase activity. In Pongo abelii (Sumatran orangutan), this protein is GTP-binding protein GEM (GEM).